The sequence spans 388 residues: N5-carboxyaminoimidazole ribonucleotide synthase (388 aa).

Residues K105, K140, 174–177 (ESFV), E182, and 267–268 (NE) each bind ATP. The ATP-grasp domain maps to 109–297 (RHFLQNLGLP…QFALQLQAVT (189 aa)).

Belongs to the PurK/PurT family. As to quaternary structure, homodimer.

The enzyme catalyses 5-amino-1-(5-phospho-beta-D-ribosyl)imidazole + hydrogencarbonate + ATP = 5-carboxyamino-1-(5-phospho-D-ribosyl)imidazole + ADP + phosphate + 2 H(+). The protein operates within purine metabolism; IMP biosynthesis via de novo pathway; 5-amino-1-(5-phospho-D-ribosyl)imidazole-4-carboxylate from 5-amino-1-(5-phospho-D-ribosyl)imidazole (N5-CAIR route): step 1/2. In terms of biological role, catalyzes the ATP-dependent conversion of 5-aminoimidazole ribonucleotide (AIR) and HCO(3)(-) to N5-carboxyaminoimidazole ribonucleotide (N5-CAIR). The chain is N5-carboxyaminoimidazole ribonucleotide synthase from Synechocystis sp. (strain ATCC 27184 / PCC 6803 / Kazusa).